The primary structure comprises 272 residues: DNA repair protein RecO (272 aa).

Belongs to the RecO family.

Functionally, involved in DNA repair and RecF pathway recombination. The polypeptide is DNA repair protein RecO (Limosilactobacillus fermentum (strain NBRC 3956 / LMG 18251) (Lactobacillus fermentum)).